A 407-amino-acid polypeptide reads, in one-letter code: Steroid 3-ketoacyl-CoA thiolase FadA6 (407 aa).

C110 acts as the Acyl-thioester intermediate in catalysis. CoA is bound by residues Q178, 237-239 (RES), and S262. Catalysis depends on proton acceptor residues H363 and C393. G395 is a binding site for substrate.

It belongs to the thiolase-like superfamily. Thiolase family.

It catalyses the reaction an acyl-CoA + acetyl-CoA = a 3-oxoacyl-CoA + CoA. The enzyme catalyses 6-methyl-3,7-dioxodecanedioyl-CoA + CoA = 4-methyl-5-oxo-octanedioyl-CoA + acetyl-CoA. The protein operates within steroid metabolism; cholesterol degradation. May be involved in the final steps of cholesterol and steroid degradation. Catalyzes the formation of 4-methyl-5-oxo-octanedioyl-CoA (MOODA-CoA) and acetyl-CoA from 6-methyl-3,7-dioxodecanedioyl-CoA (MeDODA-CoA) and coenzyme A. The chain is Steroid 3-ketoacyl-CoA thiolase FadA6 from Mycobacterium tuberculosis (strain ATCC 25618 / H37Rv).